The chain runs to 306 residues: Acetaldehyde dehydrogenase (306 aa).

12 to 15 (SGNI) is an NAD(+) binding site. The active-site Acyl-thioester intermediate is the Cys127. Residues 158-166 (SAGPGTRAN) and Asn277 each bind NAD(+).

Belongs to the acetaldehyde dehydrogenase family.

The enzyme catalyses acetaldehyde + NAD(+) + CoA = acetyl-CoA + NADH + H(+). This Mycolicibacterium gilvum (strain PYR-GCK) (Mycobacterium gilvum (strain PYR-GCK)) protein is Acetaldehyde dehydrogenase.